Here is a 343-residue protein sequence, read N- to C-terminus: Sodium/bile acid cotransporter 7-B (343 aa).

The Cytoplasmic portion of the chain corresponds to 1–9; that stretch reads MGLLERLRK. The chain crosses the membrane as a helical span at residues 10–30; sequence EWFIIGIILVIVAAKLEPTIG. The Extracellular segment spans residues 31-37; the sequence is EKGGPLK. A helical membrane pass occupies residues 38–58; the sequence is PEITITYIAVSAIFFNSGLSL. The Cytoplasmic portion of the chain corresponds to 59 to 71; the sequence is KTEELTNALMHVK. Residues 72–92 form a helical membrane-spanning segment; sequence LHLFVQLFTLVFFPTAIWIFL. Residues 93–116 lie on the Extracellular side of the membrane; that stretch reads QVLSLTPINEWLLKGLQTVSCMPP. A helical membrane pass occupies residues 117-137; the sequence is PVSSAVILTKAVGGNEAAAIF. Asn138 is a topological domain (cytoplasmic). Residues 139 to 159 form a helical membrane-spanning segment; it reads SAFGSFLGIVVTPLLLLLFLG. The Extracellular portion of the chain corresponds to 160-163; sequence SSSS. Residues 164–184 traverse the membrane as a helical segment; that stretch reads VPFTSIFSQLFMTVVVPLIIG. Residues 185–201 are Cytoplasmic-facing; that stretch reads QIVRRYIKDWLERKKPP. A helical transmembrane segment spans residues 202–222; the sequence is FGAISSCVLLMIIYTTFCDTF. At 223–234 the chain is on the extracellular side; it reads SNPNIDLDTFSL. Residues 235–255 traverse the membrane as a helical segment; the sequence is VVIVFIIFFIQLAFMLLTFLF. Residues 256 to 270 lie on the Cytoplasmic side of the membrane; the sequence is STSKNSGFTPADTVA. A helical membrane pass occupies residues 271-291; sequence IVFCSTHKSLTLGIPMLKIVF. Topologically, residues 292–298 are extracellular; sequence AGYEHLS. Residues 299 to 319 form a helical membrane-spanning segment; it reads LISVPLLIYHPAQILLGSVLV. Residues 320–343 are Cytoplasmic-facing; sequence PTIKSWMLSRRKALKLTRQPKIPL.

The protein belongs to the bile acid:sodium symporter (BASS) (TC 2.A.28) family.

The protein resides in the cell membrane. It is found in the endoplasmic reticulum membrane. The protein localises to the golgi apparatus membrane. Its function is as follows. Involved in teeth and skeletal development. Has an essential role in the biosynthesis and trafficking of glycosaminoglycans and glycoproteins to produce a proper functioning extracellular matrix. Required for extracellular matrix mineralization. Also involved in the regulation of cellular calcium homeostasis. Does not show transport activity towards bile acids or steroid sulfates. This chain is Sodium/bile acid cotransporter 7-B (slc10a7-b), found in Xenopus laevis (African clawed frog).